Consider the following 396-residue polypeptide: MANTKVADVVTETLHVAGVKRIYGVVGDSLNGITDSLRRRGDIDWIHVRHEESAAFAAGAEAHLTGELAVCAGSCGPGNLHLINGLFDCHRSRVPVLAIAAHIPSAEIGRGYFQETHPESLFRECSHYCELVSSPEQLPGVLESAIRAAVGLRGVAVVIIPGDVALRESNAKPAAGASMALRPPVVQPAAADVDALAQLLNDSGKVTLLCGRGCAGAHDPLVKLAEALKAPIVHAFGGKEYVEYDNPYDVGMTGLIGFSSGYHAMLNCDTLLMLGTDFPYRQFYPADAKIAQVDVRPENLGRRARLDLGMVGDVSATIGALLPKLKARTDRAYLDACLAHYRKAREGLDELPPASRDASPFTHNTWPSWSARQRRTMRFSRSTWARRRSGPRVISP.

This is an uncharacterized protein from Pseudomonas amyloderamosa.